The following is a 161-amino-acid chain: Putative pre-16S rRNA nuclease (161 aa).

This sequence belongs to the YqgF nuclease family.

Its subcellular location is the cytoplasm. Functionally, could be a nuclease involved in processing of the 5'-end of pre-16S rRNA. The chain is Putative pre-16S rRNA nuclease from Prochlorococcus marinus (strain MIT 9313).